An 872-amino-acid chain; its full sequence is Chaperone protein ClpB 2 (872 aa).

The region spanning 6–148 (PNKFTEKAWE…AEIIKQIRGT (143 aa)) is the Clp R domain. Repeat regions lie at residues 9 to 73 (FTEK…IAQQ) and 85 to 148 (LGRS…IRGT). The tract at residues 161–342 (ESLEKYGRDL…RRFQEVLVDE (182 aa)) is NBD1. Residue 208–215 (GEPGVGKT) coordinates ATP. The tract at residues 343–551 (PNVLDTISIL…IAEIISKWTG (209 aa)) is linker. Residues 393–527 (IDLVDEAAAK…LETQLAEQQT (135 aa)) adopt a coiled-coil conformation. Positions 561–772 (EKEKLLHLED…RVDETIIFHG (212 aa)) are NBD2. 611 to 618 (GPTGVGKT) contributes to the ATP binding site. The segment at 773–872 (LQKSELRSIV…TSLRGDLVIV (100 aa)) is C-terminal.

The protein belongs to the ClpA/ClpB family. In terms of assembly, homohexamer. The oligomerization is ATP-dependent.

It is found in the cytoplasm. In terms of biological role, part of a stress-induced multi-chaperone system, it is involved in the recovery of the cell from heat-induced damage, in cooperation with DnaK, DnaJ and GrpE. Acts before DnaK, in the processing of protein aggregates. Protein binding stimulates the ATPase activity; ATP hydrolysis unfolds the denatured protein aggregates, which probably helps expose new hydrophobic binding sites on the surface of ClpB-bound aggregates, contributing to the solubilization and refolding of denatured protein aggregates by DnaK. This is Chaperone protein ClpB 2 (clpB2) from Synechocystis sp. (strain ATCC 27184 / PCC 6803 / Kazusa).